Consider the following 146-residue polypeptide: Snaclec agkicetin-C subunit beta (146 aa).

Residues 1-23 form the signal peptide; sequence MGRFIFVSFGLLVVFLSLSGTGA. 3 cysteine pairs are disulfide-bonded: cysteine 25–cysteine 36, cysteine 53–cysteine 142, and cysteine 119–cysteine 134. The C-type lectin domain maps to 32–143; sequence YEGNCYLVVK…CSRTQPFVCK (112 aa).

It belongs to the snaclec family. In terms of assembly, heterodimer of subunits alpha and beta; disulfide-linked. As to expression, expressed by the venom gland.

The protein resides in the secreted. Its function is as follows. Is a potent glycoprotein Ibalpha (GP1BA) antagonist. Concentration-dependently inhibits botrocetin-, ristocetin- and low dose thrombin-induced platelet aggregation. Inhibits platelet adhesion only through inhibiting the vWF interaction with GP1BA, but has minimal effect on other platelet receptors, such as alpha-IIb/beta-3 (ITGA2B/ITGB3) or alpha-2/beta-1 (ITGA2/ITGB1). Causes an instant severe thrombocytopenia in rats and is not lethal to mice. This is Snaclec agkicetin-C subunit beta from Deinagkistrodon acutus (Hundred-pace snake).